The following is a 78-amino-acid chain: Acyl carrier protein (78 aa).

One can recognise a Carrier domain in the interval 2 to 77 (SDTVERVKKI…DAVKFIDKAS (76 aa)). Position 37 is an O-(pantetheine 4'-phosphoryl)serine (Ser37).

The protein belongs to the acyl carrier protein (ACP) family. In terms of processing, 4'-phosphopantetheine is transferred from CoA to a specific serine of apo-ACP by AcpS. This modification is essential for activity because fatty acids are bound in thioester linkage to the sulfhydryl of the prosthetic group.

It localises to the cytoplasm. It participates in lipid metabolism; fatty acid biosynthesis. Its function is as follows. Carrier of the growing fatty acid chain in fatty acid biosynthesis. In Bartonella quintana (strain Toulouse) (Rochalimaea quintana), this protein is Acyl carrier protein.